Here is a 337-residue protein sequence, read N- to C-terminus: Probable cytosolic iron-sulfur protein assembly protein 1 (337 aa).

WD repeat units lie at residues 11–50 (LHND…ENLL), 57–96 (VHKK…LEEG), 109–148 (GHEN…EEYE), 155–194 (EHSQ…WECA), 199–240 (GHEG…EDDQ), 252–290 (AHRS…SEVS), and 301–337 (AHTV…NYQD).

It belongs to the WD repeat CIA1 family. As to quaternary structure, interacts with NAR1.

The protein localises to the cytoplasm. It is found in the nucleus. In terms of biological role, essential component of the cytosolic iron-sulfur (Fe/S) protein assembly machinery. Required for the maturation of extramitochondrial Fe/S proteins. This chain is Probable cytosolic iron-sulfur protein assembly protein 1, found in Candida glabrata (strain ATCC 2001 / BCRC 20586 / JCM 3761 / NBRC 0622 / NRRL Y-65 / CBS 138) (Yeast).